Consider the following 359-residue polypeptide: Type-1 angiotensin II receptor (359 aa).

Over 1-25 (MALNSSADDGIKRIQDDCPKAGRHS) the chain is Extracellular. N4 carries N-linked (GlcNAc...) asparagine glycosylation. Residues Q15 and D17 each coordinate angiotensin II. 2 disulfides stabilise this stretch: C18–C274 and C101–C180. Residues 26–55 (YIFVMIPTLYSIIFVVGIFGNSLVVIVIYF) traverse the membrane as a helical segment. The Cytoplasmic segment spans residues 56–61 (YMKLKT). The chain crosses the membrane as a helical span at residues 62–89 (VASVFLLNLALADLCFLLTLPVWAVYTA). At 90-98 (MEYRWPFGN) the chain is on the extracellular side. A helical transmembrane segment spans residues 99–125 (HLCKIASAGISFNLYASVFLLTCLSID). The Cytoplasmic portion of the chain corresponds to 126–141 (RYLAIVHPMKSRLRRT). Residues 142-165 (MLVAKVTCVVIWLLAGLASLPAVI) form a helical membrane-spanning segment. The Extracellular segment spans residues 166–190 (HRNVYFIENTNSTVCAFHYESQNST). R167 provides a ligand contact to angiotensin II. N176 carries an N-linked (GlcNAc...) asparagine glycan. F182, H183, and Y184 together coordinate angiotensin II. N188 carries N-linked (GlcNAc...) asparagine glycosylation. A helical transmembrane segment spans residues 191–216 (LPVGLGLTKNILGFMFPFLIILTSYT). Position 199 (K199) interacts with angiotensin II. The Cytoplasmic segment spans residues 217–239 (LIWKALKKAYEIQKNKPRNDDIF). The chain crosses the membrane as a helical span at residues 240-268 (RIIMAIVLFFFFSWIPHQIFTFLDVLIQL). Residues 269–278 (GVIRDCKIAD) are Extracellular-facing. Residues 279–304 (VVDTAMPITICIAYFNNCLNPLFYGF) traverse the membrane as a helical segment. Residues 305 to 359 (LGKKFKKYFLQLLKYIPPKAKSHSSLSTKMSTLSYRPSDNMNSSAKKPASCFEVE) are Cytoplasmic-facing. C355 carries the S-palmitoyl cysteine lipid modification.

The protein belongs to the G-protein coupled receptor 1 family. In terms of assembly, interacts with MAS1. Interacts with ARRB1. Interacts with FLNA (via filamin repeat 21); increases PKA-mediated phosphorylation of FLNA. C-terminal Ser or Thr residues may be phosphorylated.

The protein resides in the cell membrane. Functionally, receptor for angiotensin II, a vasoconstricting peptide, which acts as a key regulator of blood pressure and sodium retention by the kidney. The activated receptor in turn couples to G-alpha proteins G(q) (GNAQ, GNA11, GNA14 or GNA15) and thus activates phospholipase C and increases the cytosolic Ca(2+) concentrations, which in turn triggers cellular responses such as stimulation of protein kinase C. In Meriones unguiculatus (Mongolian jird), this protein is Type-1 angiotensin II receptor (AGTR1).